Here is a 125-residue protein sequence, read N- to C-terminus: Large ribosomal subunit protein bL12 (125 aa).

It belongs to the bacterial ribosomal protein bL12 family. In terms of assembly, homodimer. Part of the ribosomal stalk of the 50S ribosomal subunit. Forms a multimeric L10(L12)X complex, where L10 forms an elongated spine to which 2 to 4 L12 dimers bind in a sequential fashion. Binds GTP-bound translation factors.

In terms of biological role, forms part of the ribosomal stalk which helps the ribosome interact with GTP-bound translation factors. Is thus essential for accurate translation. This Mesorhizobium japonicum (strain LMG 29417 / CECT 9101 / MAFF 303099) (Mesorhizobium loti (strain MAFF 303099)) protein is Large ribosomal subunit protein bL12.